Reading from the N-terminus, the 122-residue chain is MIGKHCILELCECNSVKLDDEAFIRTTIQMASKVAGAQLLNLITHKFVPQGVTGLALLAESHISIHTWPESGYAAVDVFTCGDQTMPDKACQLLVEELQSKRHSLKTLRRDTPVMISNALIN.

Ser-61 acts as the Schiff-base intermediate with substrate; via pyruvic acid in catalysis. Ser-61 bears the Pyruvic acid (Ser); by autocatalysis mark. His-66 acts as the Proton acceptor; for processing activity in catalysis. Cys-81 functions as the Proton donor; for catalytic activity in the catalytic mechanism.

This sequence belongs to the prokaryotic AdoMetDC family. Type 1 subfamily. Heterotetramer of two alpha and two beta chains arranged as a dimer of alpha/beta heterodimers. Pyruvate serves as cofactor. Is synthesized initially as an inactive proenzyme. Formation of the active enzyme involves a self-maturation process in which the active site pyruvoyl group is generated from an internal serine residue via an autocatalytic post-translational modification. Two non-identical subunits are generated from the proenzyme in this reaction, and the pyruvate is formed at the N-terminus of the alpha chain, which is derived from the carboxyl end of the proenzyme. The post-translation cleavage follows an unusual pathway, termed non-hydrolytic serinolysis, in which the side chain hydroxyl group of the serine supplies its oxygen atom to form the C-terminus of the beta chain, while the remainder of the serine residue undergoes an oxidative deamination to produce ammonia and the pyruvoyl group blocking the N-terminus of the alpha chain.

The enzyme catalyses S-adenosyl-L-methionine + H(+) = S-adenosyl 3-(methylsulfanyl)propylamine + CO2. The protein operates within amine and polyamine biosynthesis; S-adenosylmethioninamine biosynthesis; S-adenosylmethioninamine from S-adenosyl-L-methionine: step 1/1. Its function is as follows. Catalyzes the decarboxylation of S-adenosylmethionine to S-adenosylmethioninamine (dcAdoMet), the propylamine donor required for the synthesis of the polyamines spermine and spermidine from the diamine putrescine. In Prochlorococcus marinus (strain MIT 9211), this protein is S-adenosylmethionine decarboxylase proenzyme.